Reading from the N-terminus, the 349-residue chain is Palmitoyltransferase PFA5 (349 aa).

2 consecutive transmembrane segments (helical) span residues 19-39 (LIPFLTVLLQCYGVWAFCHQF) and 57-77 (LIIVVLSLTFLIWYIWALMLV). In terms of domain architecture, DHHC spans 126–176 (IWCSNCQSLKMSRTHHSTKVGYCVPRFDHYCVWIGTVLGRLNYKLFVQFTF). Residue cysteine 156 is the S-palmitoyl cysteine intermediate of the active site. The next 2 membrane-spanning stretches (helical) occupy residues 170–190 (LFVQFTFYLDLVVLILMISIA) and 204–224 (VYAVFALACCALLMAGPLFLT).

This sequence belongs to the DHHC palmitoyltransferase family. PFA5 subfamily.

It localises to the membrane. The enzyme catalyses L-cysteinyl-[protein] + hexadecanoyl-CoA = S-hexadecanoyl-L-cysteinyl-[protein] + CoA. The sequence is that of Palmitoyltransferase PFA5 (PFA5) from Kluyveromyces lactis (strain ATCC 8585 / CBS 2359 / DSM 70799 / NBRC 1267 / NRRL Y-1140 / WM37) (Yeast).